Reading from the N-terminus, the 674-residue chain is Phosphopantothenoylcysteine decarboxylase subunit VHS3 (674 aa).

5 disordered regions span residues 1–164 (MTNK…SILS), 190–230 (LNSD…RPSV), 348–368 (QHNS…NITG), 384–426 (TSSN…SNVV), and 575–674 (VSAG…LQRS). The segment covering 15 to 81 (ASNTLSGAEQ…TSGAVVSNTP (67 aa)) has biased composition (polar residues). A Phosphothreonine modification is found at Thr90. Residues 106–116 (EQTPPNQVARQ) are compositionally biased toward polar residues. Residues 137–150 (NLKDINTKVPKDGE) are compositionally biased toward basic and acidic residues. The span at 152 to 164 (SASSFSTPTSILS) shows a compositional bias: polar residues. Over residues 198–212 (SPRKEHPHFYVEDPL) the composition is skewed to basic and acidic residues. The span at 214–230 (TPSVRSRSNSTSPRPSV) shows a compositional bias: low complexity. Polar residues predominate over residues 351-368 (SIDTSFNSTNSNAGNITG). Over residues 384 to 395 (TSSNSAASQTNN) the composition is skewed to low complexity. Residues 403 to 426 (MASTTGFPSTLGGSRTYSNSSNVV) are compositionally biased toward polar residues. The segment covering 580-591 (EEEEDEDNDEED) has biased composition (acidic residues). Basic and acidic residues predominate over residues 592–602 (DNKKNDTGGKD). The segment covering 603-660 (EDNDDDDDDDDDDDDDDDDDDDDDDDDDDDDDDDDDDDDDDDDDDDDDEDDEDEDEDD) has biased composition (acidic residues). Residues 661 to 674 (EGKKKEDKGGLQRS) show a composition bias toward basic and acidic residues.

The protein belongs to the HFCD (homooligomeric flavin containing Cys decarboxylase) superfamily. As to quaternary structure, interacts with the C-terminal domain of PPZ1. Component of the phosphopantothenoylcysteine decarboxylase (PPCDC) complex, a heterotrimer composed of CAB3, SIS2 and VHS3.

Component of the phosphopantothenoylcysteine decarboxylase (PPCDC) involved in the coenzyme A synthesis. Acts as an inhibitory subunit of protein phosphatase PPZ1, which is involved in many cellular processes such as G1-S transition or salt tolerance. The protein is Phosphopantothenoylcysteine decarboxylase subunit VHS3 (VHS3) of Saccharomyces cerevisiae (strain ATCC 204508 / S288c) (Baker's yeast).